The following is a 282-amino-acid chain: Glutamate racemase (282 aa).

Substrate contacts are provided by residues 13–14 and 45–46; these read DS and YG. Cys76 (proton donor/acceptor) is an active-site residue. 77–78 is a substrate binding site; it reads NT. Cys186 functions as the Proton donor/acceptor in the catalytic mechanism. Residue 187–188 coordinates substrate; it reads TH.

It belongs to the aspartate/glutamate racemases family.

It carries out the reaction L-glutamate = D-glutamate. The protein operates within cell wall biogenesis; peptidoglycan biosynthesis. Provides the (R)-glutamate required for cell wall biosynthesis. The chain is Glutamate racemase from Ralstonia pickettii (strain 12J).